The sequence spans 1088 residues: Serine/threonine-protein kinase LATS2 (1088 aa).

The disordered stretch occupies residues 24–49 (EGLKQPSKSSVQGLPAGPNSDTSLDA). The residue at position 83 (serine 83) is a Phosphoserine; by AURKA. The 42-residue stretch at 98-139 (EVNRQMLQELVNAGCDQEMAGRALKQTGSRSIEAALEYISKM) folds into the UBA domain. Residues 101 to 141 (RQMLQELVNAGCDQEMAGRALKQTGSRSIEAALEYISKMGY) are interaction with ubiquitinated AMOTL2. Polar residues predominate over residues 271–280 (RSPSFQSKTP). Residues 271-323 (RSPSFQSKTPPETGGYASLPTKGQGGPPGAGLAFPPPAAGLYVPHPHHKQAGP) form a disordered region. Threonine 279 is modified (phosphothreonine). Phosphoserine is present on serine 380. Disordered stretches follow at residues 383–428 (KPGL…SLPA) and 454–483 (PQTAVGPSHPAWVPAPAPAPAPAPAPAAEG). Residues 404-413 (SRTNSFNSHQ) are compositionally biased toward polar residues. Residues 466-478 (VPAPAPAPAPAPA) are compositionally biased toward pro residues. The PPxY motif signature appears at 515-518 (PPPY). Residues 543–592 (SLRAGPNEPEGGDKSRKSAKGDKGGKDKKQIQTSPVPVRKNSRDEEKRES) form a disordered region. The segment covering 553 to 572 (GGDKSRKSAKGDKGGKDKKQ) has biased composition (basic and acidic residues). Phosphoserine is present on serine 576. A compositionally biased stretch (basic and acidic residues) spans 583–592 (NSRDEEKRES). Residues 668-973 (FVKIKTLGIG…ADDLKAHPFF (306 aa)) form the Protein kinase domain. ATP-binding positions include 674-682 (LGIGAFGEV) and lysine 697. Aspartate 791 serves as the catalytic Proton acceptor. Residues 974-1052 (SAIDFSSDIR…RRFFDDNGYP (79 aa)) enclose the AGC-kinase C-terminal domain. The interval 994 to 1022 (SHPMDTSNFDPVDEESPWNDASEGSTKAW) is disordered. Residue threonine 1041 is modified to Phosphothreonine. The tract at residues 1056-1088 (PKPSGAEASQAESSDLESSDLVDQTEGCQPVYV) is disordered.

The protein belongs to the protein kinase superfamily. AGC Ser/Thr protein kinase family. As to quaternary structure, interacts with and is phosphorylated by AURKA. Binds to AR. Interacts with AJUBA during mitosis and this complex regulates organization of the spindle apparatus through recruitment of gamma-tubulin to the centrosome. Interacts (via PPxY motif) with YAP1 (via WW domains). Interacts with MOB1A and MOB1B. Interacts with LIMD1, WTIP and AJUBA. Interacts with SNAI1. Interacts with WWC1, WWC2 and WWC3 (via their WW domains). Interacts (via UBA domain) with ubiquitinated AMOTL2; the interaction promotes LATS2 phosphorylation of YAP1. Requires Mg(2+) as cofactor. Autophosphorylated and phosphorylated during M-phase and the G1/S-phase of the cell cycle. Phosphorylated and activated by STK3/MST2. Phosphorylated by MAP4Ks; in parallel to STK3/MST2 and resulting to its activation. Phosphorylation by NUAK2 may regulate its activity in phosphorylation and inactivation YAP1. Expressed at high levels in heart and skeletal muscle and at lower levels in all other tissues examined.

It is found in the cytoplasm. The protein resides in the cytoskeleton. It localises to the microtubule organizing center. The protein localises to the centrosome. Its subcellular location is the spindle pole. It is found in the nucleus. The catalysed reaction is L-seryl-[protein] + ATP = O-phospho-L-seryl-[protein] + ADP + H(+). It catalyses the reaction L-threonyl-[protein] + ATP = O-phospho-L-threonyl-[protein] + ADP + H(+). In terms of biological role, negative regulator of YAP1 in the Hippo signaling pathway that plays a pivotal role in organ size control and tumor suppression by restricting proliferation and promoting apoptosis. The core of this pathway is composed of a kinase cascade wherein STK3/MST2 and STK4/MST1, in complex with its regulatory protein SAV1, phosphorylates and activates LATS1/2 in complex with its regulatory protein MOB1, which in turn phosphorylates and inactivates YAP1 oncoprotein and WWTR1/TAZ. Phosphorylation of YAP1 by LATS2 inhibits its translocation into the nucleus to regulate cellular genes important for cell proliferation, cell death, and cell migration. Also phosphorylates YAP1 in response to cell contact inhibition-driven WWP1 ubiquitination of AMOTL2, which results in LATS2 activation. Acts as a tumor suppressor which plays a critical role in centrosome duplication, maintenance of mitotic fidelity and genomic stability. Negatively regulates G1/S transition by down-regulating cyclin E/CDK2 kinase activity. Negative regulator of the androgen receptor. Phosphorylates SNAI1 in the nucleus leading to its nuclear retention and stabilization, which enhances its epithelial-mesenchymal transition and tumor cell invasion/migration activities. This tumor-promoting activity is independent of its effects upon YAP1 or WWTR1/TAZ. Acts as an activator of the NLRP3 inflammasome by mediating phosphorylation of 'Ser-265' of NLRP3 following NLRP3 palmitoylation, promoting NLRP3 activation by NEK7. This is Serine/threonine-protein kinase LATS2 from Homo sapiens (Human).